The sequence spans 216 residues: MRSLPALPKRLHGPSIWALYILGFLPAVWGFYLGATGRLPGNAVKEFEHLLGIWALRFLIATLAITPIRDLFGVNWLRYRRALGLLAFYYVMMHFLTYMVLDQTLLLPAIVADIARRPFITIGMAALVLLIPLAVTSNIWSIRRLGQRWNKLHRLVYVIAAAGALHFAMSVKVVGPEQMLYLFLVAVLVAWRAVRKRFLRWRRQGTAPMRSQARAG.

5 helical membrane passes run 16–36 (IWALYILGFLPAVWGFYLGAT), 48–68 (EHLLGIWALRFLIATLAITPI), 82–102 (ALGLLAFYYVMMHFLTYMVLD), 119–139 (FITIGMAALVLLIPLAVTSNI), and 155–175 (LVYVIAAAGALHFAMSVKVVG).

The protein belongs to the MsrQ family. As to quaternary structure, heterodimer of a catalytic subunit (MsrP) and a heme-binding subunit (MsrQ). Requires FMN as cofactor. The cofactor is heme b.

The protein resides in the cell inner membrane. Its function is as follows. Part of the MsrPQ system that repairs oxidized periplasmic proteins containing methionine sulfoxide residues (Met-O), using respiratory chain electrons. Thus protects these proteins from oxidative-stress damage caused by reactive species of oxygen and chlorine generated by the host defense mechanisms. MsrPQ is essential for the maintenance of envelope integrity under bleach stress, rescuing a wide series of structurally unrelated periplasmic proteins from methionine oxidation. MsrQ provides electrons for reduction to the reductase catalytic subunit MsrP, using the quinone pool of the respiratory chain. This chain is Protein-methionine-sulfoxide reductase heme-binding subunit MsrQ, found in Rhizobium meliloti (strain 1021) (Ensifer meliloti).